We begin with the raw amino-acid sequence, 356 residues long: UDP-N-acetylglucosamine--N-acetylmuramyl-(pentapeptide) pyrophosphoryl-undecaprenol N-acetylglucosamine transferase (356 aa).

UDP-N-acetyl-alpha-D-glucosamine-binding positions include 15-17, Asn-127, Arg-163, Ser-191, Ile-244, 263-268, and Gln-288; these read TGG and ALTVSE.

Belongs to the glycosyltransferase 28 family. MurG subfamily.

It localises to the cell inner membrane. It catalyses the reaction di-trans,octa-cis-undecaprenyl diphospho-N-acetyl-alpha-D-muramoyl-L-alanyl-D-glutamyl-meso-2,6-diaminopimeloyl-D-alanyl-D-alanine + UDP-N-acetyl-alpha-D-glucosamine = di-trans,octa-cis-undecaprenyl diphospho-[N-acetyl-alpha-D-glucosaminyl-(1-&gt;4)]-N-acetyl-alpha-D-muramoyl-L-alanyl-D-glutamyl-meso-2,6-diaminopimeloyl-D-alanyl-D-alanine + UDP + H(+). It participates in cell wall biogenesis; peptidoglycan biosynthesis. Functionally, cell wall formation. Catalyzes the transfer of a GlcNAc subunit on undecaprenyl-pyrophosphoryl-MurNAc-pentapeptide (lipid intermediate I) to form undecaprenyl-pyrophosphoryl-MurNAc-(pentapeptide)GlcNAc (lipid intermediate II). The polypeptide is UDP-N-acetylglucosamine--N-acetylmuramyl-(pentapeptide) pyrophosphoryl-undecaprenol N-acetylglucosamine transferase (Yersinia pestis (strain Pestoides F)).